A 172-amino-acid polypeptide reads, in one-letter code: Nicotinamide-nucleotide adenylyltransferase (172 aa).

It belongs to the archaeal NMN adenylyltransferase family.

The protein resides in the cytoplasm. It catalyses the reaction beta-nicotinamide D-ribonucleotide + ATP + H(+) = diphosphate + NAD(+). The protein operates within cofactor biosynthesis; NAD(+) biosynthesis; NAD(+) from nicotinamide D-ribonucleotide: step 1/1. In Sulfurisphaera tokodaii (strain DSM 16993 / JCM 10545 / NBRC 100140 / 7) (Sulfolobus tokodaii), this protein is Nicotinamide-nucleotide adenylyltransferase.